Consider the following 362-residue polypeptide: Protein RecA (362 aa).

67–74 (GPESSGKT) lines the ATP pocket. The span at 337 to 356 (VADAPADSAPAPVAAVAPKA) shows a compositional bias: low complexity. The segment at 337-362 (VADAPADSAPAPVAAVAPKASARKSA) is disordered.

The protein belongs to the RecA family.

It is found in the cytoplasm. Can catalyze the hydrolysis of ATP in the presence of single-stranded DNA, the ATP-dependent uptake of single-stranded DNA by duplex DNA, and the ATP-dependent hybridization of homologous single-stranded DNAs. It interacts with LexA causing its activation and leading to its autocatalytic cleavage. This is Protein RecA from Clavibacter michiganensis subsp. michiganensis (strain NCPPB 382).